The chain runs to 171 residues: UPF0398 protein M6_Spy1399 (171 aa).

Belongs to the UPF0398 family.

The polypeptide is UPF0398 protein M6_Spy1399 (Streptococcus pyogenes serotype M6 (strain ATCC BAA-946 / MGAS10394)).